A 290-amino-acid polypeptide reads, in one-letter code: 4-hydroxy-tetrahydrodipicolinate synthase (290 aa).

Position 44 (T44) interacts with pyruvate. Y132 acts as the Proton donor/acceptor in catalysis. K160 functions as the Schiff-base intermediate with substrate in the catalytic mechanism. I202 is a pyruvate binding site.

Belongs to the DapA family. As to quaternary structure, homotetramer; dimer of dimers.

It is found in the cytoplasm. The catalysed reaction is L-aspartate 4-semialdehyde + pyruvate = (2S,4S)-4-hydroxy-2,3,4,5-tetrahydrodipicolinate + H2O + H(+). Its pathway is amino-acid biosynthesis; L-lysine biosynthesis via DAP pathway; (S)-tetrahydrodipicolinate from L-aspartate: step 3/4. Catalyzes the condensation of (S)-aspartate-beta-semialdehyde [(S)-ASA] and pyruvate to 4-hydroxy-tetrahydrodipicolinate (HTPA). The chain is 4-hydroxy-tetrahydrodipicolinate synthase from Trichlorobacter lovleyi (strain ATCC BAA-1151 / DSM 17278 / SZ) (Geobacter lovleyi).